We begin with the raw amino-acid sequence, 215 residues long: Cytidylate kinase (215 aa).

10–18 (GPAAAGKST) lines the ATP pocket.

Belongs to the cytidylate kinase family. Type 1 subfamily.

The protein resides in the cytoplasm. The catalysed reaction is CMP + ATP = CDP + ADP. The enzyme catalyses dCMP + ATP = dCDP + ADP. In Staphylococcus epidermidis (strain ATCC 35984 / DSM 28319 / BCRC 17069 / CCUG 31568 / BM 3577 / RP62A), this protein is Cytidylate kinase.